The chain runs to 741 residues: Beta-galactosidase 10 (741 aa).

The N-terminal stretch at 1–29 (MNRVTTESIASTAILVVMVFLFSWRSIEA) is a signal peptide. A glycan (N-linked (GlcNAc...) asparagine) is linked at Asn-31. Glu-188 (proton donor) is an active-site residue. Glu-257 acts as the Nucleophile in catalysis. N-linked (GlcNAc...) asparagine glycans are attached at residues Asn-358, Asn-396, Asn-469, Asn-525, and Asn-583.

It belongs to the glycosyl hydrolase 35 family. As to expression, ubiquitous.

The protein resides in the secreted. It localises to the extracellular space. The protein localises to the apoplast. The enzyme catalyses Hydrolysis of terminal non-reducing beta-D-galactose residues in beta-D-galactosides.. This Arabidopsis thaliana (Mouse-ear cress) protein is Beta-galactosidase 10 (BGAL10).